Consider the following 138-residue polypeptide: Large ribosomal subunit protein bL17 (138 aa).

It belongs to the bacterial ribosomal protein bL17 family. Part of the 50S ribosomal subunit. Contacts protein L32.

This is Large ribosomal subunit protein bL17 from Bradyrhizobium diazoefficiens (strain JCM 10833 / BCRC 13528 / IAM 13628 / NBRC 14792 / USDA 110).